The primary structure comprises 141 residues: Galactose-6-phosphate isomerase subunit LacA (141 aa).

The protein belongs to the LacAB/RpiB family. In terms of assembly, heteromultimeric protein consisting of LacA and LacB.

It carries out the reaction aldehydo-D-galactose 6-phosphate = keto-D-tagatose 6-phosphate. The protein operates within carbohydrate metabolism; D-galactose 6-phosphate degradation; D-tagatose 6-phosphate from D-galactose 6-phosphate: step 1/1. The polypeptide is Galactose-6-phosphate isomerase subunit LacA (Streptococcus pneumoniae (strain Taiwan19F-14)).